We begin with the raw amino-acid sequence, 38 residues long: Photosystem II reaction center protein L (38 aa).

The helical transmembrane segment at 17-37 threads the bilayer; the sequence is SLYWGLLLIFVLAVLFSSYIF.

Belongs to the PsbL family. PSII is composed of 1 copy each of membrane proteins PsbA, PsbB, PsbC, PsbD, PsbE, PsbF, PsbH, PsbI, PsbJ, PsbK, PsbL, PsbM, PsbT, PsbY, PsbZ, Psb30/Ycf12, at least 3 peripheral proteins of the oxygen-evolving complex and a large number of cofactors. It forms dimeric complexes.

Its subcellular location is the plastid. The protein resides in the chloroplast thylakoid membrane. In terms of biological role, one of the components of the core complex of photosystem II (PSII). PSII is a light-driven water:plastoquinone oxidoreductase that uses light energy to abstract electrons from H(2)O, generating O(2) and a proton gradient subsequently used for ATP formation. It consists of a core antenna complex that captures photons, and an electron transfer chain that converts photonic excitation into a charge separation. This subunit is found at the monomer-monomer interface and is required for correct PSII assembly and/or dimerization. The sequence is that of Photosystem II reaction center protein L from Bigelowiella natans (Pedinomonas minutissima).